The sequence spans 200 residues: Recombination protein RecR (200 aa).

The C4-type zinc finger occupies 59-74 (CSVCFHLSADPVCDIC). The 95-residue stretch at 82-176 (TVICVVADSR…RVTRIAFGLP (95 aa)) folds into the Toprim domain.

It belongs to the RecR family.

Functionally, may play a role in DNA repair. It seems to be involved in an RecBC-independent recombinational process of DNA repair. It may act with RecF and RecO. The protein is Recombination protein RecR of Acaryochloris marina (strain MBIC 11017).